The sequence spans 402 residues: Calcium-responsive transactivator (402 aa).

Positions 1–148 are N-terminal auto-inhibitory domain; necessary for interaction with SMARCA4/BRG1; the sequence is MSVAFASARP…TLPTTSMSMS (148 aa). Positions 50-53 match the SH2-binding motif; sequence YQQI. Disordered stretches follow at residues 72–129, 141–170, 195–250, 262–290, and 305–402; these read QSLL…GPNH, PTTS…SVPL, MHQQ…SSQQ, QYGH…YQPA, and TQHY…NYQQ. Low complexity predominate over residues 92 to 106; that stretch reads QSGSAQGLHSQGSLS. Residues 117–129 show a composition bias toward polar residues; sequence SLMQAQIGNGPNH. Residues 149–237 are methionine-rich intra-molecular domain; sequence GSGHGSGPGY…GGGVMGQRPM (89 aa). Residues 196-224 show a composition bias toward low complexity; sequence HQQAASSHYSAAQGGSQHYQGQSMAMMGQ. The tract at residues 251–323 is MFD domain; sequence YLGQEEYYGG…SQYSQQQTGY (73 aa). 2 stretches are compositionally biased toward low complexity: residues 311-379 and 390-402; these read GGNS…RASQ and YGYE…NYQQ. Residues 340-402 are necessary for nuclear localization; that stretch reads NQQSYPGQQQ…EQGQYGNYQQ (63 aa). The SH2-binding motif lies at 359–362; that stretch reads SQYS. Residues 377–385 carry the SH3-binding motif; sequence ASQTGPSTQ. Positions 393 to 402 are necessary for interaction with CREBBP and for the recruitment of CREBBP to the nuclear bodies; the sequence is EQGQYGNYQQ. Positions 397-400 match the SH2-binding motif; that stretch reads YGNY.

The protein belongs to the SS18 family. In terms of assembly, homodimer. Dimerization may be necessary for its function in neuronal dendritic development. Interacts (via C-terminus) with CREBBP (via N-terminus), EP300 and SMARCA4/BRG1. Interacts with the nBAF complex. Association with CREBBP facilitates transcription while the association with SMARCA4/BRG1 suppresses CREST-mediated transcription in resting neurons.

It localises to the nucleus. Its subcellular location is the chromosome. The protein localises to the centromere. The protein resides in the kinetochore. In terms of biological role, transcriptional activator which is required for calcium-dependent dendritic growth and branching in cortical neurons. Recruits CREB-binding protein (CREBBP) to nuclear bodies. Component of the CREST-BRG1 complex, a multiprotein complex that regulates promoter activation by orchestrating a calcium-dependent release of a repressor complex and a recruitment of an activator complex. In resting neurons, transcription of the c-FOS promoter is inhibited by BRG1-dependent recruitment of a phospho-RB1-HDAC1 repressor complex. Upon calcium influx, RB1 is dephosphorylated by calcineurin, which leads to release of the repressor complex. At the same time, there is increased recruitment of CREBBP to the promoter by a CREST-dependent mechanism, which leads to transcriptional activation. The CREST-BRG1 complex also binds to the NR2B promoter, and activity-dependent induction of NR2B expression involves a release of HDAC1 and recruitment of CREBBP. This chain is Calcium-responsive transactivator (SS18L1), found in Bos taurus (Bovine).